The chain runs to 546 residues: Chaperonin GroEL 1 (546 aa).

Residues 30–33 (TLGP), Lys-51, 87–91 (DGTTT), Gly-415, 479–481 (NAA), and Asp-495 each bind ATP. The tract at residues 526–546 (KEDAPMPGGMPGGMGGMGMDM) is disordered. Over residues 534 to 546 (GMPGGMGGMGMDM) the composition is skewed to gly residues.

The protein belongs to the chaperonin (HSP60) family. In terms of assembly, forms a cylinder of 14 subunits composed of two heptameric rings stacked back-to-back. Interacts with the co-chaperonin GroES.

It is found in the cytoplasm. It catalyses the reaction ATP + H2O + a folded polypeptide = ADP + phosphate + an unfolded polypeptide.. In terms of biological role, together with its co-chaperonin GroES, plays an essential role in assisting protein folding. The GroEL-GroES system forms a nano-cage that allows encapsulation of the non-native substrate proteins and provides a physical environment optimized to promote and accelerate protein folding. The sequence is that of Chaperonin GroEL 1 from Burkholderia ambifaria (strain ATCC BAA-244 / DSM 16087 / CCUG 44356 / LMG 19182 / AMMD) (Burkholderia cepacia (strain AMMD)).